A 244-amino-acid polypeptide reads, in one-letter code: Probable H/ACA ribonucleoprotein complex subunit 1-like protein (244 aa).

Disordered regions lie at residues 1-53 (MSFR…GGYD) and 145-244 (FLPQ…TKFE). RGG-box stretches follow at residues 4–51 (RGGR…GRGG) and 153–222 (RGRG…RGRG). Positions 160 to 173 (RGGDRGGRGSDRGG) are enriched in basic and acidic residues. 2 stretches are compositionally biased toward gly residues: residues 174–201 (RGGFGRGGGGGFRGGDRGGFGGGRGGFR) and 208–217 (FRGGRGGDFG). Over residues 218–228 (GRGRGDFKRSY) the composition is skewed to basic and acidic residues.

It belongs to the GAR1 family. Component of the small nucleolar ribonucleoprotein particle containing H/ACA-type snoRNAs (H/ACA snoRNPs).

It localises to the nucleus. The protein localises to the nucleolus. In terms of biological role, required for ribosome biogenesis. Part of a complex which catalyzes pseudouridylation of rRNA. This involves the isomerization of uridine such that the ribose is subsequently attached to C5, instead of the normal N1. Pseudouridine ('psi') residues may serve to stabilize the conformation of rRNAs. Involved in phase separation into sub-nucleolar condensates. Essential for normal development and also plays a role in fertility. The sequence is that of Probable H/ACA ribonucleoprotein complex subunit 1-like protein from Caenorhabditis elegans.